Reading from the N-terminus, the 233-residue chain is MAKLTKRMRVIREKVDVTKEYEINEAVALLQELATAKFVESVDVAVNLGIDARKSDQNVRGATVLPHGTGREIRVAVFTQGANAEAAKEAGADIVGMEDLAEQVKKGEMNFDVVVASPDAMRVVGQLGTILGPRGLMPNPKVGTVTPNVAEAVKNAKAGQVRYRNDKNGIIHTTIGKANFSAEQIKENLEALLVALKKAKPSSAKGTFLKKVSISTTMGAGVAVDQASLNTQA.

It belongs to the universal ribosomal protein uL1 family. Part of the 50S ribosomal subunit.

In terms of biological role, binds directly to 23S rRNA. The L1 stalk is quite mobile in the ribosome, and is involved in E site tRNA release. Functionally, protein L1 is also a translational repressor protein, it controls the translation of the L11 operon by binding to its mRNA. In Vibrio campbellii (strain ATCC BAA-1116), this protein is Large ribosomal subunit protein uL1.